The sequence spans 100 residues: Small ribosomal subunit protein uS14c (100 aa).

The protein belongs to the universal ribosomal protein uS14 family. Part of the 30S ribosomal subunit.

Its subcellular location is the plastid. The protein resides in the chloroplast. In terms of biological role, binds 16S rRNA, required for the assembly of 30S particles. This is Small ribosomal subunit protein uS14c from Liriodendron tulipifera (Tuliptree).